The following is a 319-amino-acid chain: Transaldolase (319 aa).

Lys-126 acts as the Schiff-base intermediate with substrate in catalysis.

It belongs to the transaldolase family. Type 1 subfamily. Homodimer.

Its subcellular location is the cytoplasm. The catalysed reaction is D-sedoheptulose 7-phosphate + D-glyceraldehyde 3-phosphate = D-erythrose 4-phosphate + beta-D-fructose 6-phosphate. The protein operates within carbohydrate degradation; pentose phosphate pathway; D-glyceraldehyde 3-phosphate and beta-D-fructose 6-phosphate from D-ribose 5-phosphate and D-xylulose 5-phosphate (non-oxidative stage): step 2/3. Transaldolase is important for the balance of metabolites in the pentose-phosphate pathway. This is Transaldolase from Bordetella avium (strain 197N).